Reading from the N-terminus, the 396-residue chain is Putative cyclin-B3-1 (396 aa).

The segment at 1–98 (MLRDGNKQSK…KVLDVTAKPK (98 aa)) is disordered. Residues 21 to 32 (KTTVKTSLQNRS) are compositionally biased toward polar residues. Over residues 39–57 (VGRSKSRSISSIPSSAVAS) the composition is skewed to low complexity. Positions 76–85 (GESSSSGNKD) are enriched in polar residues.

Belongs to the cyclin family. Cyclin AB subfamily.

In Arabidopsis thaliana (Mouse-ear cress), this protein is Putative cyclin-B3-1 (CYCB3-1).